Consider the following 500-residue polypeptide: NAD(P)H-quinone oxidoreductase chain 4, chloroplastic (500 aa).

13 consecutive transmembrane segments (helical) span residues 4–24 (FPWLTIIVVFPIFAGSLIFFL), 35–55 (YTICICILELLLTTYAFCYHF), 87–107 (IGPILLTGFITTLATLAAWPV), 134–154 (LLLFFIMWELELIPVYLLLAM), 167–187 (FILYTAGGSVFLLMGVLGVAL), 208–228 (VLEIIFYIGFFIAFAVKSPII), 242–262 (HYSTCMLLAGILLKMGAYGLI), 272–292 (AHSIFSPWLMIIGTIQIIYAA), 305–325 (IAYPSVSHMGFIIIGISSLTD), 330–350 (GALLQIISHGFIGAALFFLAG), 386–406 (LALPGMSGFVAELIVFFGIIT), 411–431 (LLIPKLLITFVMAIGIILTPI), and 462–482 (LFLSISIFLPVIGIGIYPDFV).

This sequence belongs to the complex I subunit 4 family.

It is found in the plastid. The protein resides in the chloroplast thylakoid membrane. The catalysed reaction is a plastoquinone + NADH + (n+1) H(+)(in) = a plastoquinol + NAD(+) + n H(+)(out). It catalyses the reaction a plastoquinone + NADPH + (n+1) H(+)(in) = a plastoquinol + NADP(+) + n H(+)(out). The chain is NAD(P)H-quinone oxidoreductase chain 4, chloroplastic from Solanum tuberosum (Potato).